The chain runs to 238 residues: Ubiquinone biosynthesis O-methyltransferase (238 aa).

S-adenosyl-L-methionine-binding residues include Arg-39, Gly-59, Asp-80, and Met-124.

It belongs to the methyltransferase superfamily. UbiG/COQ3 family.

It carries out the reaction a 3-demethylubiquinol + S-adenosyl-L-methionine = a ubiquinol + S-adenosyl-L-homocysteine + H(+). The enzyme catalyses a 3-(all-trans-polyprenyl)benzene-1,2-diol + S-adenosyl-L-methionine = a 2-methoxy-6-(all-trans-polyprenyl)phenol + S-adenosyl-L-homocysteine + H(+). The protein operates within cofactor biosynthesis; ubiquinone biosynthesis. O-methyltransferase that catalyzes the 2 O-methylation steps in the ubiquinone biosynthetic pathway. This Aeromonas salmonicida (strain A449) protein is Ubiquinone biosynthesis O-methyltransferase.